An 80-amino-acid polypeptide reads, in one-letter code: Lantibiotic Flvalpha.a (80 aa).

The propeptide at 1 to 38 (MNKNPIYRSEEEAKDIACGNVAAELDENSQALDAINGA) is cleaved by FlvT. 2,3-didehydrobutyrine; by FlvM1 occurs at positions 43 and 47. The segment at residues 52–55 (TVGC) is a cross-link (beta-methyllanthionine (Thr-Cys); by FlvM1). Residues 58–68 (SYGLGNGGYCC) constitute a cross-link (lanthionine (Ser-Cys); by FlvM1). Cross-links (beta-methyllanthionine (Thr-Cys); by FlvM1) lie at residues 69-74 (TYTVEC) and 71-78 (TVECSKTC).

Post-translationally, the lanthionine formed by Ser-58 and Cys-68 forms a putative lipid II binding motif. Maturation of FlvA1 peptides involves the enzymatic conversion of Thr, and Ser into dehydrated AA and the formation of thioether bonds with cysteines. Modifications are processed by the flavecin synthetase FlvM1. This is followed by membrane translocation and cleavage of the modified precursor. In terms of processing, contains DL-lanthionine and DL-beta-methyllanthionine, when coepressed in E.coli with the flavecin synthetase FlvM1.

It is found in the secreted. Functionally, lanthionine-containing peptide antibiotic (lantibiotic) only active on Gram-positive bacteria in synergy with Flvbeta peptides, which are encoded by the same operon than Flvalpha.a. Shows antibacterial activity in synergy with Flvbeta.b, Flvbeta.c, Flvbeta.e and Flvbeta.g. Does not show antibacterial activity when tested with Flvbeta.a, Flvbeta.d, Flvbeta.f and Flvbeta.h. The bactericidal activity of lantibiotics is based on depolarization of energized bacterial cytoplasmic membranes, initiated by the formation of aqueous transmembrane pores. The polypeptide is Lantibiotic Flvalpha.a (Ruminococcus flavefaciens).